The following is a 196-amino-acid chain: MIDFDGYRPNVGIVICNRKGQVLWAKRCGQNSWQFPQGGINDNESAEQAMYRELHEEVGLQPKDVRLLYVSKHWLRYKLPKRLLRYDSKPMCIGQKQRWFLLQLVSDEKNINMQTTKSPEFDGWRWVSFWYPVRQVVSFKRDVYRKVMKEFASILFTDNPLIFSASREANSLHYSANKKYSQTKYTKRHFYKSRGQ.

One can recognise a Nudix hydrolase domain in the interval 6–149 (GYRPNVGIVI…KRDVYRKVMK (144 aa)). The short motif at 38 to 59 (GGINDNESAEQAMYRELHEEVG) is the Nudix box element.

This sequence belongs to the Nudix hydrolase family. RppH subfamily. It depends on a divalent metal cation as a cofactor.

Functionally, accelerates the degradation of transcripts by removing pyrophosphate from the 5'-end of triphosphorylated RNA, leading to a more labile monophosphorylated state that can stimulate subsequent ribonuclease cleavage. The protein is RNA pyrophosphohydrolase of Haemophilus influenzae (strain ATCC 51907 / DSM 11121 / KW20 / Rd).